We begin with the raw amino-acid sequence, 388 residues long: Succinate--CoA ligase [ADP-forming] subunit beta (388 aa).

Residues 9 to 244 (KQLFAEYGLP…PSQEDEREAH (236 aa)) enclose the ATP-grasp domain. ATP is bound by residues K46, 53–55 (GRG), E99, T102, and E107. Residues N199 and D213 each contribute to the Mg(2+) site. Substrate-binding positions include N264 and 321 to 323 (GIV).

Belongs to the succinate/malate CoA ligase beta subunit family. In terms of assembly, heterotetramer of two alpha and two beta subunits. Mg(2+) is required as a cofactor.

It carries out the reaction succinate + ATP + CoA = succinyl-CoA + ADP + phosphate. The catalysed reaction is GTP + succinate + CoA = succinyl-CoA + GDP + phosphate. It functions in the pathway carbohydrate metabolism; tricarboxylic acid cycle; succinate from succinyl-CoA (ligase route): step 1/1. Its function is as follows. Succinyl-CoA synthetase functions in the citric acid cycle (TCA), coupling the hydrolysis of succinyl-CoA to the synthesis of either ATP or GTP and thus represents the only step of substrate-level phosphorylation in the TCA. The beta subunit provides nucleotide specificity of the enzyme and binds the substrate succinate, while the binding sites for coenzyme A and phosphate are found in the alpha subunit. In Marinomonas sp. (strain MWYL1), this protein is Succinate--CoA ligase [ADP-forming] subunit beta.